Here is a 493-residue protein sequence, read N- to C-terminus: D-glyceraldehyde dehydrogenase (NADP(+)) (493 aa).

Residues 70–92 adopt a coiled-coil conformation; the sequence is RAKELIEKNRAELENIIMEENGK. NADP(+) contacts are provided by residues 146–149, arginine 157, 172–176, 204–210, 225–248, cysteine 281, and 381–383; these read TPWN, KPSSD, RGSEIGD, GSTA…ILEL, and EIF. Substrate contacts are provided by asparagine 149 and arginine 157. Glutamate 247 acts as the Proton acceptor in catalysis. Cysteine 281 provides a ligand contact to substrate. Cysteine 281 serves as the catalytic Proton donor.

It belongs to the aldehyde dehydrogenase family. Glyceraldehyde dehydrogenase subfamily. As to quaternary structure, homotetramer. Dimer of dimers.

It catalyses the reaction D-glyceraldehyde + NADP(+) + H2O = (R)-glycerate + NADPH + 2 H(+). Its pathway is carbohydrate degradation; glycolysis. With respect to regulation, inhibited by calcium, cadmium, copper and mercury ions. Stable for 2 hours at 60 degrees Celsius but activity is decreased to less than 50 percent within 20 minutes at 80 degrees Celsius. Two folds activity enhancement in the presence of 1 mM glutathione, DTT, or 2-mercaptoethanol. Complete activity inhibition by thiol-modifying reagents such as p-chloromercuribenzoic acid or p-hydroxy-mercuribenzoic acid. Functionally, NADP-dependent dehydrogenase of the nED (non-phosphorylated Entner-Doudoroff) pathway with highest activity towards glyceraldehydes (e.g. D,L-glyceraldehyde and D-glyceraldehyde), to a lesser extent towards D,L-glyceraldehyde-3-phosphate and glycolaldehyde, but no activity towards aliphatic or aromatic aldehydes. The polypeptide is D-glyceraldehyde dehydrogenase (NADP(+)) (Thermoplasma acidophilum (strain ATCC 25905 / DSM 1728 / JCM 9062 / NBRC 15155 / AMRC-C165)).